A 130-amino-acid chain; its full sequence is Small ribosomal subunit protein uS11 (130 aa).

Belongs to the universal ribosomal protein uS11 family. Part of the 30S ribosomal subunit. Interacts with proteins S7 and S18. Binds to IF-3.

In terms of biological role, located on the platform of the 30S subunit, it bridges several disparate RNA helices of the 16S rRNA. Forms part of the Shine-Dalgarno cleft in the 70S ribosome. The protein is Small ribosomal subunit protein uS11 of Nitrobacter hamburgensis (strain DSM 10229 / NCIMB 13809 / X14).